The chain runs to 251 residues: Cytochrome c oxidase subunit 2 (251 aa).

Helical transmembrane passes span 42-62 and 83-103; these read NIMFYLFIILGLVSWMLFTIV and IIWTMFPAVILLIIAFPSFIL. His-186, Cys-221, Glu-223, Cys-225, His-229, and Met-232 together coordinate Cu cation. Glu-223 is a binding site for Mg(2+).

This sequence belongs to the cytochrome c oxidase subunit 2 family. Component of the cytochrome c oxidase (complex IV, CIV), a multisubunit enzyme composed of a catalytic core of 3 subunits and several supernumerary subunits. The complex exists as a monomer or a dimer and forms supercomplexes (SCs) in the inner mitochondrial membrane with ubiquinol-cytochrome c oxidoreductase (cytochrome b-c1 complex, complex III, CIII). Cu cation serves as cofactor.

The protein resides in the mitochondrion inner membrane. It catalyses the reaction 4 Fe(II)-[cytochrome c] + O2 + 8 H(+)(in) = 4 Fe(III)-[cytochrome c] + 2 H2O + 4 H(+)(out). Component of the cytochrome c oxidase, the last enzyme in the mitochondrial electron transport chain which drives oxidative phosphorylation. The respiratory chain contains 3 multisubunit complexes succinate dehydrogenase (complex II, CII), ubiquinol-cytochrome c oxidoreductase (cytochrome b-c1 complex, complex III, CIII) and cytochrome c oxidase (complex IV, CIV), that cooperate to transfer electrons derived from NADH and succinate to molecular oxygen, creating an electrochemical gradient over the inner membrane that drives transmembrane transport and the ATP synthase. Cytochrome c oxidase is the component of the respiratory chain that catalyzes the reduction of oxygen to water. Electrons originating from reduced cytochrome c in the intermembrane space (IMS) are transferred via the dinuclear copper A center (CU(A)) of subunit 2 and heme A of subunit 1 to the active site in subunit 1, a binuclear center (BNC) formed by heme A3 and copper B (CU(B)). The BNC reduces molecular oxygen to 2 water molecules using 4 electrons from cytochrome c in the IMS and 4 protons from the mitochondrial matrix. This chain is Cytochrome c oxidase subunit 2 (COX2), found in Candida glabrata (strain ATCC 2001 / BCRC 20586 / JCM 3761 / NBRC 0622 / NRRL Y-65 / CBS 138) (Yeast).